We begin with the raw amino-acid sequence, 159 residues long: Protein-export protein SecB (159 aa).

This sequence belongs to the SecB family. As to quaternary structure, homotetramer, a dimer of dimers. One homotetramer interacts with 1 SecA dimer.

Its subcellular location is the cytoplasm. Its function is as follows. One of the proteins required for the normal export of preproteins out of the cell cytoplasm. It is a molecular chaperone that binds to a subset of precursor proteins, maintaining them in a translocation-competent state. It also specifically binds to its receptor SecA. The protein is Protein-export protein SecB of Nitrobacter winogradskyi (strain ATCC 25391 / DSM 10237 / CIP 104748 / NCIMB 11846 / Nb-255).